The primary structure comprises 346 residues: Ribosomal RNA small subunit methyltransferase H (346 aa).

Residues 46–48, Asp-63, Phe-90, Asp-113, and Gln-120 contribute to the S-adenosyl-L-methionine site; that span reads GGY. A disordered region spans residues 270-327; sequence GGSAGSRHMPETHMRLPSFTPAVKGAVGPTPEEEERNPRARSAKLRAGIRTENSPLED.

It belongs to the methyltransferase superfamily. RsmH family.

It is found in the cytoplasm. It catalyses the reaction cytidine(1402) in 16S rRNA + S-adenosyl-L-methionine = N(4)-methylcytidine(1402) in 16S rRNA + S-adenosyl-L-homocysteine + H(+). In terms of biological role, specifically methylates the N4 position of cytidine in position 1402 (C1402) of 16S rRNA. This Brucella ovis (strain ATCC 25840 / 63/290 / NCTC 10512) protein is Ribosomal RNA small subunit methyltransferase H.